Reading from the N-terminus, the 333-residue chain is MKNLRNRSFLTLLDFSRQEVEFLLTLSEDLKRAKYIGTEKPMLKNKNIALLFEKDSTRTRCAFEVAAHDQGANVTYLGPTGSQMGKKETTKDTARVLGGMYDGIEYRGFSQRTVETLAEYSGVPVWNGLTDEDHPTQVLADFLTAKEVLKKDYADINFTYVGDGRNNVANALMQGAAIMGMNFHLVCPKELNPTDELLNRCKNIAAENGGNILITDNIDQGVKGSDVIYTDVWVSMGEPDEVWKERLELLKPYQVNKEMMDKTGNPNVIFEHCLPSFHNADTKIGQQIFEKYGIREMEVTDEVFESKASVVFQEAENRMHTIKAVMVATLGEF.

Residues 56-59, Gln83, Arg107, and 134-137 each bind carbamoyl phosphate; these read STRT and HPTQ. L-ornithine-binding positions include Asn167, Asp231, and 235 to 236; that span reads SM. Residues 273-274 and Arg318 contribute to the carbamoyl phosphate site; that span reads CL.

The protein belongs to the aspartate/ornithine carbamoyltransferase superfamily. OTCase family.

It is found in the cytoplasm. The catalysed reaction is carbamoyl phosphate + L-ornithine = L-citrulline + phosphate + H(+). It functions in the pathway amino-acid biosynthesis; L-arginine biosynthesis; L-arginine from L-ornithine and carbamoyl phosphate: step 1/3. In terms of biological role, reversibly catalyzes the transfer of the carbamoyl group from carbamoyl phosphate (CP) to the N(epsilon) atom of ornithine (ORN) to produce L-citrulline. The sequence is that of Ornithine carbamoyltransferase from Staphylococcus aureus (strain MSSA476).